Here is a 345-residue protein sequence, read N- to C-terminus: Alpha-N-acetylneuraminide alpha-2,8-sialyltransferase (345 aa).

Residues 1–15 (MKLQGSRMWLCPRTR) lie on the Cytoplasmic side of the membrane. Residues 16 to 36 (LPVGASALGFLILCWLYVFPG) form a helical; Signal-anchor for type II membrane protein membrane-spanning segment. The Lumenal segment spans residues 37 to 345 (YRLPGHKEMV…KKDVSSQKPH (309 aa)). N-linked (GlcNAc...) asparagine glycosylation is found at N59 and N107. 2 cysteine pairs are disulfide-bonded: C126–C275 and C140–C335. N131 and N154 together coordinate CMP-N-acetyl-beta-neuraminate. Substrate-binding positions include N154 and 176-178 (NPS). N-linked (GlcNAc...) asparagine glycosylation is present at N233. Residues S262, T263, G264, W284, and H298 each coordinate CMP-N-acetyl-beta-neuraminate. 262–264 (STG) contacts substrate. The active-site Proton donor/acceptor is the H310.

This sequence belongs to the glycosyltransferase 29 family.

The protein localises to the golgi apparatus membrane. The catalysed reaction is an N-acetyl-alpha-neuraminyl-(2-&gt;3)-beta-D-galactosyl derivative + CMP-N-acetyl-beta-neuraminate = an N-acetyl-alpha-neuraminyl-(2-&gt;8)-N-acetyl-alpha-neuraminyl-(2-&gt;3)-beta-D-galactosyl derivative + CMP + H(+). It catalyses the reaction a ganglioside GM3 (d18:1(4E)) + CMP-N-acetyl-beta-neuraminate = a ganglioside GD3 (d18:1(4E)) + CMP + H(+). It carries out the reaction a ganglioside GD3 (d18:1(4E)) + CMP-N-acetyl-beta-neuraminate = a ganglioside GT3 (d18:1(4E)) + CMP + H(+). The enzyme catalyses a ganglioside GD1a (d18:1(4E)) + CMP-N-acetyl-beta-neuraminate = a ganglioside GT1a (d18:1(4E)) + CMP + H(+). The catalysed reaction is a ganglioside GT1b (d18:1(4E)) + CMP-N-acetyl-beta-neuraminate = a ganglioside GQ1b (d18:1(4E)) + CMP + H(+). It catalyses the reaction a ganglioside GM1b (d18:1(4E)) + CMP-N-acetyl-beta-neuraminate = a ganglioside GD1c (d18:1(4E)) + CMP + H(+). It carries out the reaction a ganglioside GD3 + CMP-N-acetyl-beta-neuraminate = a ganglioside GT3 + CMP + H(+). The enzyme catalyses [alpha-N-acetylneuraminyl-(2-&gt;8)](n)-alpha-N-acetylneuraminyl-(2-&gt;8)-alpha-N-acetylneuraminyl-(2-&gt;3)-beta-D-galactosyl-(1-&gt;4)-beta-D-glucosyl-(1&lt;-&gt;1)-ceramide + CMP-N-acetyl-beta-neuraminate = [alpha-N-acetylneuraminyl-(2-&gt;8)](n+1)-alpha-N-acetylneuraminyl-(2-&gt;8)-alpha-N-acetylneuraminyl-(2-&gt;3)-beta-D-galactosyl-(1-&gt;4)-beta-D-glucosyl-(1&lt;-&gt;1)-ceramide + CMP + H(+). The protein operates within protein modification; protein glycosylation. It participates in lipid metabolism; sphingolipid metabolism. Its function is as follows. Catalyzes the addition of sialic acid in alpha 2,8-linkage to the sialic acid moiety of the ganglioside GM3 to form ganglioside GD3; gangliosides are a subfamily of complex glycosphingolipds that contain one or more residues of sialic acid. Glycosphingolipids are required for convergence extension movements during early development. Can catalyze the addition of a second alpha-2,8- sialic acid to GD3 to form GT3. Can use GM1b, GD1a and GT1b as acceptor substrates to synthesize GD1c, GT1a and GQ1b respectively. The sequence is that of Alpha-N-acetylneuraminide alpha-2,8-sialyltransferase from Xenopus tropicalis (Western clawed frog).